The primary structure comprises 478 residues: MNRIMIVDLVNDLRNKNLEAEEYIERTYEKIGKYDKYINAFITIRSKEEVLKEVKESINKGGKLAGVLIAIKDNISTEGIRTTCASKMLEDYIPPYDATVIEKLKKEGAVIIGKTNMDEFAMGSTTETSYFGPTRNPWDLERTPGGSSGGSGAALAAGYVELALGSDTGGSIRAPAAYNAIFGLKPSYGTVSRFGLVAYANSLEQIGPMARNAEDLGLLFSIIAGPDERDATTINLNLNFELKERSVKNVRIGVLSDILEMSEKPVSGVIKDVVNKLSSEGALIEDTKLGNAEYALPAYYIIAMSEASSNLARYDGVRYGYSKYMEGNWREVYAKNRGEAFGMEVKRRILLGSFILSAGYYEEFYLKALKVRNLIKKNLDELFKKYDILLSPTMPILPPKIGEVINDPVRMYAMDLNTVIANLAAIPALSMPVGFYSDLPIGLQLMGKYLSDIYLINISSFIERNITKLYNLTASVKI.

Catalysis depends on charge relay system residues Lys72 and Ser147. The active-site Acyl-ester intermediate is Ser171.

The protein belongs to the amidase family. GatA subfamily. In terms of assembly, heterotrimer of A, B and C subunits.

It carries out the reaction L-glutamyl-tRNA(Gln) + L-glutamine + ATP + H2O = L-glutaminyl-tRNA(Gln) + L-glutamate + ADP + phosphate + H(+). In terms of biological role, allows the formation of correctly charged Gln-tRNA(Gln) through the transamidation of misacylated Glu-tRNA(Gln) in organisms which lack glutaminyl-tRNA synthetase. The reaction takes place in the presence of glutamine and ATP through an activated gamma-phospho-Glu-tRNA(Gln). In Saccharolobus solfataricus (strain ATCC 35092 / DSM 1617 / JCM 11322 / P2) (Sulfolobus solfataricus), this protein is Glutamyl-tRNA(Gln) amidotransferase subunit A.